A 298-amino-acid polypeptide reads, in one-letter code: uncharacterized protein (298 aa).

Belongs to the glycosyltransferase 2 family.

This is an uncharacterized protein from Mycoplasma genitalium (strain ATCC 33530 / DSM 19775 / NCTC 10195 / G37) (Mycoplasmoides genitalium).